The chain runs to 508 residues: Glycerol kinase (508 aa).

Residue Thr-15 coordinates ADP. Residues Thr-15, Ser-16, and Ser-17 each coordinate ATP. Thr-15 is a sn-glycerol 3-phosphate binding site. Arg-19 is a binding site for ADP. Arg-85, Glu-86, Tyr-138, and Asp-251 together coordinate sn-glycerol 3-phosphate. Residues Arg-85, Glu-86, Tyr-138, Asp-251, and Gln-252 each coordinate glycerol. Positions 273, 317, and 419 each coordinate ADP. ATP-binding residues include Thr-273, Gly-317, and Gly-419.

The protein belongs to the FGGY kinase family.

The enzyme catalyses glycerol + ATP = sn-glycerol 3-phosphate + ADP + H(+). It functions in the pathway polyol metabolism; glycerol degradation via glycerol kinase pathway; sn-glycerol 3-phosphate from glycerol: step 1/1. With respect to regulation, inhibited by fructose 1,6-bisphosphate (FBP). In terms of biological role, key enzyme in the regulation of glycerol uptake and metabolism. Catalyzes the phosphorylation of glycerol to yield sn-glycerol 3-phosphate. The protein is Glycerol kinase of Mycoplasma pneumoniae (strain ATCC 29342 / M129 / Subtype 1) (Mycoplasmoides pneumoniae).